The chain runs to 376 residues: Phosphoserine aminotransferase (376 aa).

Residue Arg-42 coordinates L-glutamate. Positions 104, 163, 188, and 211 each coordinate pyridoxal 5'-phosphate. Residue Lys-212 is modified to N6-(pyridoxal phosphate)lysine. 253-254 (NT) contributes to the pyridoxal 5'-phosphate binding site.

It belongs to the class-V pyridoxal-phosphate-dependent aminotransferase family. SerC subfamily. As to quaternary structure, homodimer. It depends on pyridoxal 5'-phosphate as a cofactor.

Its subcellular location is the cytoplasm. The enzyme catalyses O-phospho-L-serine + 2-oxoglutarate = 3-phosphooxypyruvate + L-glutamate. The catalysed reaction is 4-(phosphooxy)-L-threonine + 2-oxoglutarate = (R)-3-hydroxy-2-oxo-4-phosphooxybutanoate + L-glutamate. Its pathway is amino-acid biosynthesis; L-serine biosynthesis; L-serine from 3-phospho-D-glycerate: step 2/3. The protein operates within cofactor biosynthesis; pyridoxine 5'-phosphate biosynthesis; pyridoxine 5'-phosphate from D-erythrose 4-phosphate: step 3/5. Its function is as follows. Catalyzes the reversible conversion of 3-phosphohydroxypyruvate to phosphoserine and of 3-hydroxy-2-oxo-4-phosphonooxybutanoate to phosphohydroxythreonine. The polypeptide is Phosphoserine aminotransferase (Bordetella avium (strain 197N)).